The following is a 169-amino-acid chain: Sorting nexin-24 (169 aa).

The residue at position 1 (Met1) is an N-acetylmethionine. Residues 1-125 form the PX domain; that stretch reads MEVYIPSFRH…SFDETESEES (125 aa). Positions 38, 40, 61, and 74 each coordinate a 1,2-diacyl-sn-glycero-3-phospho-(1D-myo-inositol-3-phosphate). 2 positions are modified to phosphoserine: Ser113 and Ser116.

Belongs to the sorting nexin family.

The protein resides in the cytoplasmic vesicle membrane. In terms of biological role, may be involved in several stages of intracellular trafficking. The chain is Sorting nexin-24 (Snx24) from Rattus norvegicus (Rat).